The chain runs to 353 residues: Inositol-tetrakisphosphate 1-kinase 3 (353 aa).

A disordered region spans residues 1–25 (MKLTDNEEITMNGTREMETTEQETS). 1D-myo-inositol 1,3,4-trisphosphate is bound by residues lysine 50 and lysine 92. Residues arginine 127 and lysine 177 each contribute to the ATP site. In terms of domain architecture, ATP-grasp spans 138-350 (NLSDSNGRVG…QSQCKKRALA (213 aa)). 2 residues coordinate 1D-myo-inositol 1,3,4-trisphosphate: histidine 188 and lysine 220. ATP-binding positions include 209-220 (QEFVNHGGVLFK) and serine 235. Residues aspartate 300, aspartate 315, and asparagine 317 each contribute to the Mg(2+) site. Asparagine 317 contacts 1D-myo-inositol 1,3,4-trisphosphate.

It belongs to the ITPK1 family. As to quaternary structure, monomer. Mg(2+) is required as a cofactor. In terms of tissue distribution, highly expressed in leaves and flowers, and at lower levels in roots, stems, cauline leaves and siliques.

It catalyses the reaction 1D-myo-inositol 3,4,5,6-tetrakisphosphate + ATP = 1D-myo-inositol 1,3,4,5,6-pentakisphosphate + ADP + H(+). The enzyme catalyses 1D-myo-inositol 1,3,4-trisphosphate + ATP = 1D-myo-inositol 1,3,4,5-tetrakisphosphate + ADP + H(+). It carries out the reaction 1D-myo-inositol 1,3,4-trisphosphate + ATP = 1D-myo-inositol 1,3,4,6-tetrakisphosphate + ADP + H(+). Its function is as follows. Kinase that can phosphorylate various inositol polyphosphate such as Ins(3,4,5,6)P4 or Ins(1,3,4)P3. Phosphorylates Ins(3,4,5,6)P4 to form InsP5. This reaction is thought to have regulatory importance, since Ins(3,4,5,6)P4 is an inhibitor of plasma membrane Ca(2+)-activated Cl(-) channels, while Ins(1,3,4,5,6)P5 is not. Also phosphorylates Ins(1,3,4)P3 or a racemic mixture of Ins(1,4,6)P3 and Ins(3,4,6)P3 to form InsP4. Ins(1,3,4,6)P4 is an essential molecule in the hexakisphosphate (InsP6) pathway. This chain is Inositol-tetrakisphosphate 1-kinase 3 (ITPK3), found in Arabidopsis thaliana (Mouse-ear cress).